Reading from the N-terminus, the 395-residue chain is Tyrosine--tRNA ligase 2 (395 aa).

The 'HIGH' region signature appears at 42 to 51; that stretch reads PTAPDIHLGH. The short motif at 226–230 is the 'KMSKS' region element; it reads KMSKS. Lysine 229 is an ATP binding site. In terms of domain architecture, S4 RNA-binding spans 334–395; sequence TPMANLLKEA…KRKFARITIA (62 aa).

The protein belongs to the class-I aminoacyl-tRNA synthetase family. TyrS type 2 subfamily. In terms of assembly, homodimer.

Its subcellular location is the cytoplasm. It carries out the reaction tRNA(Tyr) + L-tyrosine + ATP = L-tyrosyl-tRNA(Tyr) + AMP + diphosphate + H(+). In terms of biological role, catalyzes the attachment of tyrosine to tRNA(Tyr) in a two-step reaction: tyrosine is first activated by ATP to form Tyr-AMP and then transferred to the acceptor end of tRNA(Tyr). The protein is Tyrosine--tRNA ligase 2 of Vibrio vulnificus (strain CMCP6).